The following is a 1464-amino-acid chain: Bridge-like lipid transfer protein family member 3B (1464 aa).

The Chorein N-terminal domain maps to 3 to 94; that stretch reads GIIKKQILKH…DKVIMEMSTC (92 aa). Disordered regions lie at residues 267–297 and 409–436; these read STEQRKSMAPEPTQSSTVVASAQQVKTTQTS and DHNVGSPPKSPTHASPQHTQTEKDYPLK. Residues 278–297 are compositionally biased toward polar residues; sequence PTQSSTVVASAQQVKTTQTS. Phosphoserine is present on residues serine 414, serine 418, serine 774, serine 935, and serine 1009. 3 disordered regions span residues 1066 to 1089, 1164 to 1183, and 1392 to 1413; these read SKEETPPVRTLKSQSSLSGKPKER, LQNYGETSPDAISTNSEGAQ, and QRSVTQATQTSPGVPWPSQSAN. Polar residues-rich tracts occupy residues 1164–1182 and 1394–1413; these read LQNYGETSPDAISTNSEGA and SVTQATQTSPGVPWPSQSAN. A coiled-coil region spans residues 1418-1456; that stretch reads SFDFTREQLMEENESLKQELAKAKMALAEAHLEKDALLH.

As to quaternary structure, monomer. Homodimer (via N-terminus). Associates with the Golgi-associated retrograde protein (GARP) complex. Interacts with GARP complex component VPS52. Interacts (via C-terminal coiled-coil domain) with STX6.

It is found in the cytoplasm. The protein resides in the cytosol. Its subcellular location is the early endosome. Tube-forming lipid transport protein which mediates the transfer of lipids between membranes at organelle contact sites. Required for retrograde traffic of vesicle clusters in the early endocytic pathway to the Golgi complex. This chain is Bridge-like lipid transfer protein family member 3B, found in Homo sapiens (Human).